We begin with the raw amino-acid sequence, 580 residues long: Anaphase-promoting complex subunit 7 (580 aa).

TPR repeat units follow at residues 50–83, 107–140, 141–175, 253–286, 321–354, 356–388, 390–421, 422–456, 458–490, and 491–523; these read IISF…LFKV, YELK…SRGL, DTHL…CPLC, VLEK…DPYY, AETW…KESH, FAHS…SKNI, TARE…SPDY, SKTM…SPHC, DTVL…QETD, and LMHT…NPQY. The tract at residues 539–580 is disordered; that stretch reads GIDPDQELDQENDDDDQEEGEGENDQEENDDDDNDDDDEYIS. The span at 542-580 shows a compositional bias: acidic residues; that stretch reads PDQELDQENDDDDQEEGEGENDQEENDDDDNDDDDEYIS.

The protein belongs to the APC7 family. In terms of assembly, the APC/C is composed of at least 13 subunits that stay tightly associated throughout the cell cycle: anapc1, anapc2, anapc3, anapc4, anapc5, anapc6, anapc7, anapc8, anapc10, anapc11, cdc20, cdc26 and cdh1.

It localises to the nucleus. The protein operates within protein modification; protein ubiquitination. Its function is as follows. Component of the anaphase promoting complex/cyclosome (APC/C), a cell cycle-regulated E3 ubiquitin-protein ligase complex that controls progression through mitosis and the G1 phase of the cell cycle. The sequence is that of Anaphase-promoting complex subunit 7 (anapc7) from Dictyostelium discoideum (Social amoeba).